The chain runs to 451 residues: ATP-dependent protease ATPase subunit HslU (451 aa).

ATP is bound by residues Ile-26, 68-73 (GVGKTE), Asp-263, Glu-328, and Arg-400.

The protein belongs to the ClpX chaperone family. HslU subfamily. A double ring-shaped homohexamer of HslV is capped on each side by a ring-shaped HslU homohexamer. The assembly of the HslU/HslV complex is dependent on binding of ATP.

The protein localises to the cytoplasm. In terms of biological role, ATPase subunit of a proteasome-like degradation complex; this subunit has chaperone activity. The binding of ATP and its subsequent hydrolysis by HslU are essential for unfolding of protein substrates subsequently hydrolyzed by HslV. HslU recognizes the N-terminal part of its protein substrates and unfolds these before they are guided to HslV for hydrolysis. In Dichelobacter nodosus (strain VCS1703A), this protein is ATP-dependent protease ATPase subunit HslU.